Consider the following 261-residue polypeptide: Expansin-B2 (261 aa).

An N-terminal signal peptide occupies residues 1–24 (MAGASAKVVAMLLSVLATYGFAAG). The Expansin-like EG45 domain occupies 51–157 (GGACGFKNTN…RRVPCYHRGL (107 aa)). Intrachain disulfides connect cysteine 54/cysteine 82, cysteine 85/cysteine 152, and cysteine 90/cysteine 96. Residues 170–256 (VYLAVLVEFA…NWRANTNYGS (87 aa)) form the Expansin-like CBD domain.

It belongs to the expansin family. Expansin B subfamily. As to expression, expressed in roots.

Its subcellular location is the secreted. The protein resides in the cell wall. The protein localises to the membrane. Functionally, may cause loosening and extension of plant cell walls by disrupting non-covalent bonding between cellulose microfibrils and matrix glucans. No enzymatic activity has been found. May be required for rapid internodal elongation in deepwater rice during submergence. This Oryza sativa subsp. japonica (Rice) protein is Expansin-B2 (EXPB2).